A 36-amino-acid chain; its full sequence is Endoglucanase Cel12A (36 aa).

This sequence belongs to the glycosyl hydrolase 12 (cellulase H) family.

It localises to the secreted. It is found in the extracellular space. The catalysed reaction is Endohydrolysis of (1-&gt;4)-beta-D-glucosidic linkages in cellulose, lichenin and cereal beta-D-glucans.. Has carboxymethylcellulase activity. In Gloeophyllum trabeum (Brown rot fungus), this protein is Endoglucanase Cel12A.